The chain runs to 138 residues: ATP synthase epsilon chain (138 aa).

It belongs to the ATPase epsilon chain family. In terms of assembly, F-type ATPases have 2 components, CF(1) - the catalytic core - and CF(0) - the membrane proton channel. CF(1) has five subunits: alpha(3), beta(3), gamma(1), delta(1), epsilon(1). CF(0) has three main subunits: a, b and c.

The protein resides in the cell inner membrane. Its function is as follows. Produces ATP from ADP in the presence of a proton gradient across the membrane. The polypeptide is ATP synthase epsilon chain (Delftia acidovorans (strain DSM 14801 / SPH-1)).